The sequence spans 230 residues: Large ribosomal subunit protein bL25 (230 aa).

The protein belongs to the bacterial ribosomal protein bL25 family. CTC subfamily. Part of the 50S ribosomal subunit; part of the 5S rRNA/L5/L18/L25 subcomplex. Contacts the 5S rRNA. Binds to the 5S rRNA independently of L5 and L18.

In terms of biological role, this is one of the proteins that binds to the 5S RNA in the ribosome where it forms part of the central protuberance. The polypeptide is Large ribosomal subunit protein bL25 (rplY) (Rhodopseudomonas palustris (strain ATCC BAA-98 / CGA009)).